The primary structure comprises 99 residues: U11-barytoxin-Tl1a (99 aa).

The signal sequence occupies residues 1–21 (MKTLVLVAVLGLASLYLLSYA). The propeptide occupies 22 to 50 (SEVQQISRDEEDFRALMASFGGIFDTEER). 3 cysteine pairs are disulfide-bonded: Cys57-Cys71, Cys64-Cys76, and Cys70-Cys90.

It belongs to the neurotoxin 10 (Hwtx-1) family. 25 (ICK4) subfamily. As to expression, expressed by the venom gland.

The protein localises to the secreted. Its function is as follows. Ion channel inhibitor. The sequence is that of U11-barytoxin-Tl1a from Trittame loki (Brush-footed trapdoor spider).